The sequence spans 320 residues: 1-aminocyclopropane-1-carboxylate oxidase 3 (320 aa).

The Fe2OG dioxygenase domain maps to 154-254; that stretch reads PNFGTKVSNY…RMSIASFYNP (101 aa). Fe cation-binding residues include H178, D180, and H235.

It belongs to the iron/ascorbate-dependent oxidoreductase family. It depends on Fe cation as a cofactor. As to expression, flowers.

The catalysed reaction is 1-aminocyclopropane-1-carboxylate + L-ascorbate + O2 = ethene + L-dehydroascorbate + hydrogen cyanide + CO2 + 2 H2O. It functions in the pathway alkene biosynthesis; ethylene biosynthesis via S-adenosyl-L-methionine; ethylene from S-adenosyl-L-methionine: step 2/2. The sequence is that of 1-aminocyclopropane-1-carboxylate oxidase 3 (ACO3) from Cucumis melo (Muskmelon).